The chain runs to 464 residues: Kynurenine 3-monooxygenase (464 aa).

It belongs to the aromatic-ring hydroxylase family. KMO subfamily. FAD serves as cofactor.

The enzyme catalyses L-kynurenine + NADPH + O2 + H(+) = 3-hydroxy-L-kynurenine + NADP(+) + H2O. The protein operates within cofactor biosynthesis; NAD(+) biosynthesis; quinolinate from L-kynurenine: step 1/3. In terms of biological role, catalyzes the hydroxylation of L-kynurenine (L-Kyn) to form 3-hydroxy-L-kynurenine (L-3OHKyn). Required for synthesis of quinolinic acid. This Myxococcus xanthus (strain DK1622) protein is Kynurenine 3-monooxygenase.